Reading from the N-terminus, the 348-residue chain is Protein RecA (348 aa).

67–74 is an ATP binding site; sequence GPESSGKT.

It belongs to the RecA family.

The protein resides in the cytoplasm. In terms of biological role, can catalyze the hydrolysis of ATP in the presence of single-stranded DNA, the ATP-dependent uptake of single-stranded DNA by duplex DNA, and the ATP-dependent hybridization of homologous single-stranded DNAs. It interacts with LexA causing its activation and leading to its autocatalytic cleavage. The protein is Protein RecA of Salinispora tropica (strain ATCC BAA-916 / DSM 44818 / JCM 13857 / NBRC 105044 / CNB-440).